The sequence spans 485 residues: Cysteine--tRNA ligase (485 aa).

C27 lines the Zn(2+) pocket. A 'HIGH' region motif is present at residues 29–39 (ITAYDLCHIGH). Residues C208, H233, and E237 each coordinate Zn(2+). Residues 265–269 (KMSKS) carry the 'KMSKS' region motif. Residue K268 coordinates ATP.

It belongs to the class-I aminoacyl-tRNA synthetase family. As to quaternary structure, monomer. Requires Zn(2+) as cofactor.

The protein localises to the cytoplasm. It catalyses the reaction tRNA(Cys) + L-cysteine + ATP = L-cysteinyl-tRNA(Cys) + AMP + diphosphate. The polypeptide is Cysteine--tRNA ligase (Solidesulfovibrio magneticus (strain ATCC 700980 / DSM 13731 / RS-1) (Desulfovibrio magneticus)).